A 425-amino-acid chain; its full sequence is Glucose-1-phosphate adenylyltransferase (425 aa).

Residues Y110, G175, 190–191 (EK), and S208 contribute to the alpha-D-glucose 1-phosphate site.

This sequence belongs to the bacterial/plant glucose-1-phosphate adenylyltransferase family. As to quaternary structure, homotetramer.

It catalyses the reaction alpha-D-glucose 1-phosphate + ATP + H(+) = ADP-alpha-D-glucose + diphosphate. Its pathway is glycan biosynthesis; glycogen biosynthesis. Its function is as follows. Involved in the biosynthesis of ADP-glucose, a building block required for the elongation reactions to produce glycogen. Catalyzes the reaction between ATP and alpha-D-glucose 1-phosphate (G1P) to produce pyrophosphate and ADP-Glc. The polypeptide is Glucose-1-phosphate adenylyltransferase (Nitrosospira multiformis (strain ATCC 25196 / NCIMB 11849 / C 71)).